The primary structure comprises 101 residues: NADH-quinone oxidoreductase subunit K (101 aa).

3 helical membrane passes run 4 to 24, 30 to 50, and 61 to 81; these read LGYFLIIGAILFGLGFAGIII, IVLLMCIELMLLAVNTNFIAF, and IFVFFILTVAAAESAIGLAIL.

This sequence belongs to the complex I subunit 4L family. In terms of assembly, NDH-1 is composed of 14 different subunits. Subunits NuoA, H, J, K, L, M, N constitute the membrane sector of the complex.

Its subcellular location is the cell inner membrane. The enzyme catalyses a quinone + NADH + 5 H(+)(in) = a quinol + NAD(+) + 4 H(+)(out). NDH-1 shuttles electrons from NADH, via FMN and iron-sulfur (Fe-S) centers, to quinones in the respiratory chain. The immediate electron acceptor for the enzyme in this species is believed to be ubiquinone. Couples the redox reaction to proton translocation (for every two electrons transferred, four hydrogen ions are translocated across the cytoplasmic membrane), and thus conserves the redox energy in a proton gradient. The protein is NADH-quinone oxidoreductase subunit K of Coxiella burnetii (strain CbuG_Q212) (Coxiella burnetii (strain Q212)).